The sequence spans 435 residues: Glutamyl-tRNA reductase (435 aa).

Residues Thr-49–Arg-52, Ser-109, Glu-114–Gln-116, and Gln-120 each bind substrate. Residue Cys-50 is the Nucleophile of the active site. Residue Gly-189 to Ser-194 participates in NADP(+) binding.

It belongs to the glutamyl-tRNA reductase family. Homodimer.

The catalysed reaction is (S)-4-amino-5-oxopentanoate + tRNA(Glu) + NADP(+) = L-glutamyl-tRNA(Glu) + NADPH + H(+). Its pathway is porphyrin-containing compound metabolism; protoporphyrin-IX biosynthesis; 5-aminolevulinate from L-glutamyl-tRNA(Glu): step 1/2. Functionally, catalyzes the NADPH-dependent reduction of glutamyl-tRNA(Glu) to glutamate 1-semialdehyde (GSA). This Listeria monocytogenes serotype 4b (strain F2365) protein is Glutamyl-tRNA reductase.